Reading from the N-terminus, the 45-residue chain is Large ribosomal subunit protein bL36 (45 aa).

The protein belongs to the bacterial ribosomal protein bL36 family.

This Psychrobacter sp. (strain PRwf-1) protein is Large ribosomal subunit protein bL36.